The following is a 457-amino-acid chain: Glycine receptor subunit alpha-1 (457 aa).

Positions 1–28 (MYSFNTLRLYLWETIVFFSLAASKEAEA) are cleaved as a signal peptide. Topologically, residues 29 to 250 (ARSAPKPMSP…RFHLERQMGY (222 aa)) are extracellular. Asn66 carries an N-linked (GlcNAc...) asparagine glycan. Glycine contacts are provided by Arg93 and Ser157. A disulfide bridge links Cys166 with Cys180. The Zn(2+) site is built by Glu220 and Asp222. Cys226 and Cys237 are joined by a disulfide. Strychnine is bound at residue 230–235 (YNTGKF). Thr232 is a binding site for glycine. His243 is a binding site for Zn(2+). A helical membrane pass occupies residues 251–272 (YLIQMYIPSLLIVILSWISFWI). The Cytoplasmic segment spans residues 273-277 (NMDAA). The helical transmembrane segment at 278-298 (PARVGLGITTVLTMTTQSSGS) threads the bilayer. At 299–309 (RASLPKVSYVK) the chain is on the extracellular side. Residues 310-330 (AIDIWMAVCLLFVFSALLEYA) traverse the membrane as a helical segment. At 331 to 425 (AVNFVSRQHK…FIQRAKKIDK (95 aa)) the chain is on the cytoplasmic side. The tract at residues 391-410 (KGANNSNTTNPPPAPSKSPE) is disordered. Residues 426–446 (ISRIGFPMAFLIFNMFYWIIY) traverse the membrane as a helical segment. At 447-457 (KIVRREDVHNQ) the chain is on the extracellular side.

Belongs to the ligand-gated ion channel (TC 1.A.9) family. Glycine receptor (TC 1.A.9.3) subfamily. GLRA1 sub-subfamily. Interacts with GLRB to form heteropentameric channels; this is probably the predominant form in vivo. Heteropentamer composed of four GLRA1 subunits and one GLRB subunit. Heteropentamer composed of two GLRA1 and three GLRB. Heteropentamer composed of three GLRA1 and two GLRB. Homopentamer (in vitro). Both homopentamers and heteropentamers form functional ion channels, but their characteristics are subtly different.

Its subcellular location is the postsynaptic cell membrane. The protein resides in the synapse. The protein localises to the perikaryon. It localises to the cell projection. It is found in the dendrite. Its subcellular location is the cell membrane. It catalyses the reaction chloride(in) = chloride(out). With respect to regulation, channel opening is triggered by extracellular glycine. Channel characteristics depend on the subunit composition; heteropentameric channels are activated by lower glycine levels and display faster desensitization. Channel opening is also triggered by taurine and beta-alanine. Channel activity is potentiated by nanomolar concentrations of Zn(2+); half-maximal activation is observed with 37 nM Zn(2+). Inhibited by higher Zn(2+) levels; haf-maximal inhibition occurs at 20 uM Zn(2+). Inhibited by strychnine. Strychnine binding locks the channel in a closed conformation and prevents channel opening in response to extracellular glycine. Inhibited by lindane. Inhibited by picrotoxin. Its function is as follows. Subunit of heteromeric glycine-gated chloride channels. Plays an important role in the down-regulation of neuronal excitability. Contributes to the generation of inhibitory postsynaptic currents. Channel activity is potentiated by ethanol. Potentiation of channel activity by intoxicating levels of ethanol contribute to the sedative effects of ethanol. The sequence is that of Glycine receptor subunit alpha-1 (GLRA1) from Homo sapiens (Human).